Consider the following 351-residue polypeptide: Dihydroorotate dehydrogenase (quinone) (351 aa).

FMN-binding positions include 67-71 and T91; that span reads AGFDK. Position 71 (K71) interacts with substrate. Residue 116-120 coordinates substrate; that stretch reads NAMGF. 2 residues coordinate FMN: N145 and N178. N178 serves as a coordination point for substrate. S181 (nucleophile) is an active-site residue. N183 contacts substrate. FMN is bound by residues K214 and T242. 243-244 is a binding site for substrate; sequence NT. FMN is bound by residues G262, G291, and 312 to 313; that span reads YS.

This sequence belongs to the dihydroorotate dehydrogenase family. Type 2 subfamily. In terms of assembly, monomer. FMN is required as a cofactor.

It is found in the cell membrane. The enzyme catalyses (S)-dihydroorotate + a quinone = orotate + a quinol. The protein operates within pyrimidine metabolism; UMP biosynthesis via de novo pathway; orotate from (S)-dihydroorotate (quinone route): step 1/1. Functionally, catalyzes the conversion of dihydroorotate to orotate with quinone as electron acceptor. The protein is Dihydroorotate dehydrogenase (quinone) of Helicobacter pylori (strain P12).